Here is a 91-residue protein sequence, read N- to C-terminus: Mercuric transport protein periplasmic component (91 aa).

Positions 1–19 (MKKLFASLALAAAVAPVWA) are cleaved as a signal peptide. Positions 22-88 (QTVTLAVPGM…ATADAGYPSS (67 aa)) constitute an HMA domain. Positions 33 and 36 each coordinate Hg(2+).

This sequence belongs to the MerP family. As to quaternary structure, monomer.

The protein localises to the periplasm. In terms of biological role, involved in mercury resistance. Acts as a mercury scavenger that specifically binds to a mercuric ion in the periplasm and probably passes it to the cytoplasmic mercuric reductase MerA via the mercuric transport protein MerT. The polypeptide is Mercuric transport protein periplasmic component (Shigella flexneri).